Here is a 354-residue protein sequence, read N- to C-terminus: Rhodopsin (354 aa).

Over 1 to 36 the chain is Extracellular; it reads MNGTEGPNFYIPMSNKTGVVRSPFEYPQYYLAEPWQ. Asparagine 2 and asparagine 15 each carry an N-linked (GlcNAc...) asparagine glycan. A helical membrane pass occupies residues 37–61; sequence YSILCAYMFLLILLGFPINFMTLYV. The Cytoplasmic portion of the chain corresponds to 62–73; it reads TIQHKKLRTPLN. The helical transmembrane segment at 74–96 threads the bilayer; it reads YILLNLAFANHFMVLCGFTVTMY. Residues 97–110 lie on the Extracellular side of the membrane; it reads SSMNGYFILGATGC. Cysteine 110 and cysteine 187 form a disulfide bridge. A helical membrane pass occupies residues 111-133; that stretch reads YVEGFFATLGGEIALWSLVVLAI. The 'Ionic lock' involved in activated form stabilization motif lies at 134–136; it reads ERY. At 134 to 152 the chain is on the cytoplasmic side; that stretch reads ERYVVVCKPMSNFRFSENH. The helical transmembrane segment at 153-173 threads the bilayer; that stretch reads AVMGVAFTWIMALSCAVPPLL. The Extracellular portion of the chain corresponds to 174–202; it reads GWSRYIPEGMQCSCGVDYYTLKPEVNNES. The chain crosses the membrane as a helical span at residues 203-224; sequence FVIYMFVVHFTIPLIIIFFCYG. Residues 225–252 lie on the Cytoplasmic side of the membrane; sequence RLVCTVKEAAAQQQESATTQKAEKEVTR. The helical transmembrane segment at 253-274 threads the bilayer; that stretch reads MVIIMVVFFLICWVPYASVAFF. Over 275–286 the chain is Extracellular; sequence IFSNQGSEFGPI. Residues 287-308 form a helical membrane-spanning segment; sequence FMTVPAFFAKSSSIYNPVIYIM. Residue lysine 296 is modified to N6-(retinylidene)lysine. At 309-354 the chain is on the cytoplasmic side; sequence LNKQFRNCMITTLCCGKNPFGEDDASSAATSKTEASSVSSSQVSPA. S-palmitoyl cysteine attachment occurs at residues cysteine 322 and cysteine 323. A disordered region spans residues 331 to 354; that stretch reads DDASSAATSKTEASSVSSSQVSPA. A compositionally biased stretch (low complexity) spans 334–354; the sequence is SSAATSKTEASSVSSSQVSPA.

The protein belongs to the G-protein coupled receptor 1 family. Opsin subfamily. In terms of processing, contains one covalently linked retinal chromophore. Upon light absorption, the covalently bound 11-cis-retinal is converted to all-trans-retinal. After hydrolysis of the Schiff base and release of the covalently bound all-trans-retinal, active rhodopsin is regenerated by binding of a fresh molecule of 11-cis-retinal.

The protein resides in the membrane. The protein localises to the cell projection. Its subcellular location is the cilium. It localises to the photoreceptor outer segment. Its function is as follows. Photoreceptor required for image-forming vision at low light intensity. Required for photoreceptor cell viability after birth. Light-induced isomerization of 11-cis to all-trans retinal triggers a conformational change that activates signaling via G-proteins. Subsequent receptor phosphorylation mediates displacement of the bound G-protein alpha subunit by arrestin and terminates signaling. The chain is Rhodopsin (RHO) from Bufo bufo (European toad).